Reading from the N-terminus, the 69-residue chain is Conotoxin reg3.6 (69 aa).

The N-terminal stretch at 1-20 (MMSKLGVLLTICLLLFPLSA) is a signal peptide. Positions 21 to 52 (LPLDGDQPADQPAERVQDISPDQNPLFHLVKR) are excised as a propeptide. 3 cysteine pairs are disulfide-bonded: Cys54-Cys68, Cys55-Cys66, and Cys60-Cys69.

This sequence belongs to the conotoxin M superfamily. As to expression, expressed by the venom duct.

The protein localises to the secreted. The protein is Conotoxin reg3.6 of Conus regius (Crown cone).